The chain runs to 555 residues: Glypican-6 (555 aa).

The signal sequence occupies residues 1–23; sequence MPSWIRAVILPLSGLLLTLPAAA. Low complexity predominate over residues 348 to 357; sequence PALRSARSAP. Disordered regions lie at residues 348-376 and 480-501; these read PALR…PTTA and GNDV…GSGC. Residue Ser-530 is the site of GPI-anchor amidated serine attachment. A propeptide spans 531–555 (removed in mature form); the sequence is ASKFSSSLISWSLVCMVLALQRLYR.

It belongs to the glypican family. As to expression, in the cartilage growth-plate, gradient of expression with highest levels from the proliferative and pre-hypertrophic zones to lowest, if any, in the hypertrophic zones (at protein level).

The protein localises to the cell membrane. The protein resides in the secreted. It is found in the extracellular space. Functionally, cell surface proteoglycan that bears heparan sulfate. Putative cell surface coreceptor for growth factors, extracellular matrix proteins, proteases and anti-proteases. Enhances migration and invasion of cancer cells through WNT5A signaling. The chain is Glypican-6 (Gpc6) from Mus musculus (Mouse).